Reading from the N-terminus, the 195-residue chain is Small ribosomal subunit protein bS16 (195 aa).

Positions 171–181 (PEAPVAAAEPA) are enriched in low complexity. Residues 171-195 (PEAPVAAAEPAPEVKAEEKEEGGEA) form a disordered region.

This sequence belongs to the bacterial ribosomal protein bS16 family.

This chain is Small ribosomal subunit protein bS16, found in Chlorobium luteolum (strain DSM 273 / BCRC 81028 / 2530) (Pelodictyon luteolum).